The sequence spans 105 residues: Large ribosomal subunit protein uL24 (105 aa).

It belongs to the universal ribosomal protein uL24 family. Part of the 50S ribosomal subunit.

Its function is as follows. One of two assembly initiator proteins, it binds directly to the 5'-end of the 23S rRNA, where it nucleates assembly of the 50S subunit. One of the proteins that surrounds the polypeptide exit tunnel on the outside of the subunit. This Pseudothermotoga lettingae (strain ATCC BAA-301 / DSM 14385 / NBRC 107922 / TMO) (Thermotoga lettingae) protein is Large ribosomal subunit protein uL24.